The chain runs to 635 residues: ATP-dependent zinc metalloprotease FtsH (635 aa).

The Cytoplasmic portion of the chain corresponds to 1–6 (MNNQGR). A helical membrane pass occupies residues 7–27 (SILTWAALFVFVILLFNVFQS). At 28-103 (DGLLGGRNNI…VVPLETRMNT (76 aa)) the chain is on the periplasmic side. A helical membrane pass occupies residues 104–124 (FLGFLISWFPMLLLIGVWVFF). The Cytoplasmic segment spans residues 125–635 (MRQMHGGGKA…KKAKKESTNI (511 aa)). 195–202 (GPPGTGKT) serves as a coordination point for ATP. His-417 is a Zn(2+) binding site. The active site involves Glu-418. Residues His-421 and Asp-495 each coordinate Zn(2+). The segment at 600–635 (SEEENKFPFNDSPTIKIDKEKSPEKAKKAKKESTNI) is disordered. Residues 615–635 (KIDKEKSPEKAKKAKKESTNI) show a composition bias toward basic and acidic residues.

It in the central section; belongs to the AAA ATPase family. In the C-terminal section; belongs to the peptidase M41 family. As to quaternary structure, homohexamer. The cofactor is Zn(2+).

It is found in the cell inner membrane. In terms of biological role, acts as a processive, ATP-dependent zinc metallopeptidase for both cytoplasmic and membrane proteins. Plays a role in the quality control of integral membrane proteins. The sequence is that of ATP-dependent zinc metalloprotease FtsH from Rickettsia felis (strain ATCC VR-1525 / URRWXCal2) (Rickettsia azadi).